The primary structure comprises 353 residues: 3-ketosteroid-9-alpha-monooxygenase, ferredoxin reductase component (353 aa).

The FAD-binding FR-type domain maps to 8 to 117; sequence SHVLELQVAE…LAPSGTFVPK (110 aa). In terms of domain architecture, 2Fe-2S ferredoxin-type spans 264–353; that stretch reads ATAVVTLDGT…SDSVEVTYDE (90 aa). Positions 300, 305, 308, and 338 each coordinate [2Fe-2S] cluster.

In terms of assembly, monomer. The two-component system 3-ketosteroid-9-alpha-monooxygenase is composed of an oxygenase component KshA and a reductase component KshB. Requires FAD as cofactor. The cofactor is [2Fe-2S] cluster.

The enzyme catalyses androsta-1,4-diene-3,17-dione + 2 reduced [2Fe-2S]-[ferredoxin] + O2 + 2 H(+) = 9alpha-hydroxyandrosta-1,4-diene-3,17-dione + 2 oxidized [2Fe-2S]-[ferredoxin] + H2O. Its pathway is lipid metabolism; steroid biosynthesis. Functionally, involved in the degradation of cholesterol. Catalyzes the introduction of a 9a-hydroxyl moiety into 1,4-androstadiene-3,17-dione (ADD) to yield the 9alpha-hydroxy-1,4-androstadiene-3,17-dione (9OHADD) intermediate which spontaneously form 3-hydroxy-9,10-seconandrost-1,3,5(10)-triene-9,17-dione (HSA) via the meta-cleavage of ring B with concomitant aromatization of ring A. This chain is 3-ketosteroid-9-alpha-monooxygenase, ferredoxin reductase component (kshB), found in Mycolicibacterium smegmatis (strain ATCC 700084 / mc(2)155) (Mycobacterium smegmatis).